Here is a 412-residue protein sequence, read N- to C-terminus: L-cysteine:1D-myo-inositol 2-amino-2-deoxy-alpha-D-glucopyranoside ligase (412 aa).

Positions M1–R30 are disordered. A Zn(2+)-binding site is contributed by C43. Residues C43–T46, T58, and N81–T83 contribute to the L-cysteinyl-5'-AMP site. The short motif at I45–H55 is the 'HIGH' region element. Residues E187 to P192 carry the 'ERGGDP' region motif. Residue W227 participates in L-cysteinyl-5'-AMP binding. C231 contributes to the Zn(2+) binding site. Residue G249–D251 coordinates L-cysteinyl-5'-AMP. H256 serves as a coordination point for Zn(2+). L-cysteinyl-5'-AMP is bound at residue I283. Residues K289–S293 carry the 'KMSKS' region motif.

Belongs to the class-I aminoacyl-tRNA synthetase family. MshC subfamily. As to quaternary structure, monomer. Requires Zn(2+) as cofactor.

The enzyme catalyses 1D-myo-inositol 2-amino-2-deoxy-alpha-D-glucopyranoside + L-cysteine + ATP = 1D-myo-inositol 2-(L-cysteinylamino)-2-deoxy-alpha-D-glucopyranoside + AMP + diphosphate + H(+). Its function is as follows. Catalyzes the ATP-dependent condensation of GlcN-Ins and L-cysteine to form L-Cys-GlcN-Ins. The protein is L-cysteine:1D-myo-inositol 2-amino-2-deoxy-alpha-D-glucopyranoside ligase of Actinosynnema mirum (strain ATCC 29888 / DSM 43827 / JCM 3225 / NBRC 14064 / NCIMB 13271 / NRRL B-12336 / IMRU 3971 / 101).